Reading from the N-terminus, the 489-residue chain is uncharacterized protein (489 aa).

In terms of domain architecture, 2Fe-2S ferredoxin-type spans 2–84 (IKITVKRFNG…GMIIEPLRGF (83 aa)). Residues Cys48, Cys53, Cys56, and Cys68 each contribute to the [2Fe-2S] cluster site. 2 4Fe-4S ferredoxin-type domains span residues 123 to 155 (KYVE…YPGP) and 177 to 205 (TAYF…IVHR). Residues Cys134, Cys137, Cys140, Cys144, Cys186, Cys189, Cys192, and Cys196 each coordinate [4Fe-4S] cluster.

Belongs to the succinate dehydrogenase/fumarate reductase iron-sulfur protein family.

This is an uncharacterized protein from Methanocaldococcus jannaschii (strain ATCC 43067 / DSM 2661 / JAL-1 / JCM 10045 / NBRC 100440) (Methanococcus jannaschii).